A 62-amino-acid polypeptide reads, in one-letter code: Delta-theraphotoxin-Cg1a 3 (62 aa).

A signal peptide spans 1–21 (MKTSILFVIFSLALVFALSPA). The propeptide occupies 22–29 (TEIEETDR). Cystine bridges form between Cys-31/Cys-46, Cys-38/Cys-51, and Cys-45/Cys-58.

It belongs to the neurotoxin 10 (Hwtx-1) family. 33 (Jztx-1) subfamily. Expressed by the venom gland.

It localises to the secreted. Moderately inhibits voltage-gated sodium channels and weakly inhibits voltage-gated potassium channel. Inhibits the inactivation of rat Nav1.2/SCN2A (IC(50)=870 nM), rat Nav1.3/SCN3A (IC(50)=845 nM), rat Nav1.4/SCN4A (IC(50)=339 nM), human Nav1.5/SCN5A (IC(50)=335 nM) and human Nav1.7/SCN9A sodium channels (IC(50)=348 nM). The toxin delays the inactivation of sodium channels without affecting the activation and steady-state inactivation kinetics in the physiological range of voltages. Site-directed mutagenesis of the sodium channel indicates that the toxin interacts with site 3 located at the extracellular S3-S4 linker of domain IV. On potassium channels, it inhibits activation of channels with an IC(50) of 8.05 uM through a voltage sensor-trapping mechanism. It increases muscle contraction in several assays (mouse phrenic nerve-diaphragm, toad heart, rat vas deferens) and is suggested to act both presynaptically and postsynaptically. The protein is Delta-theraphotoxin-Cg1a 3 of Chilobrachys guangxiensis (Chinese earth tiger tarantula).